Consider the following 207-residue polypeptide: Outer-membrane lipoprotein LolB (207 aa).

The N-terminal stretch at 1 to 26 is a signal peptide; sequence MSKLKIDTKRRFSLLIALVLIISLSS. C27 is lipidated: N-palmitoyl cysteine. Residue C27 is the site of S-diacylglycerol cysteine attachment.

It belongs to the LolB family. Monomer.

Its subcellular location is the cell outer membrane. Plays a critical role in the incorporation of lipoproteins in the outer membrane after they are released by the LolA protein. This chain is Outer-membrane lipoprotein LolB, found in Francisella tularensis subsp. tularensis (strain FSC 198).